Consider the following 456-residue polypeptide: Signal recognition particle 54 kDa protein (456 aa).

Residues 104–111 (GLYGNGKT), 184–188 (DTSGR), and 242–245 (TKMD) each bind GTP.

The protein belongs to the GTP-binding SRP family. SRP54 subfamily. As to quaternary structure, part of the signal recognition particle protein translocation system, which is composed of SRP and FtsY. Archaeal SRP consists of a 7S RNA molecule of 300 nucleotides and two protein subunits: SRP54 and SRP19.

It localises to the cytoplasm. It carries out the reaction GTP + H2O = GDP + phosphate + H(+). Involved in targeting and insertion of nascent membrane proteins into the cytoplasmic membrane. Binds to the hydrophobic signal sequence of the ribosome-nascent chain (RNC) as it emerges from the ribosomes. The SRP-RNC complex is then targeted to the cytoplasmic membrane where it interacts with the SRP receptor FtsY. The sequence is that of Signal recognition particle 54 kDa protein from Thermoplasma acidophilum (strain ATCC 25905 / DSM 1728 / JCM 9062 / NBRC 15155 / AMRC-C165).